The sequence spans 352 residues: ATPase GET3 (352 aa).

26-33 (KGGVGKTT) contributes to the ATP binding site. Residue D57 is part of the active site. ATP contacts are provided by E243 and N270. Residues C283 and C286 each contribute to the Zn(2+) site.

Belongs to the arsA ATPase family. As to quaternary structure, homodimer. Component of the Golgi to ER traffic (GET) complex, which is composed of GET1, GET2 and GET3. Within the complex, GET1 and GET2 form a heterotetramer which is stabilized by phosphatidylinositol binding and which binds to the GET3 homodimer. Interacts with the chloride channel protein GEF1.

It is found in the cytoplasm. It localises to the endoplasmic reticulum. The protein resides in the golgi apparatus. ATPase required for the post-translational delivery of tail-anchored (TA) proteins to the endoplasmic reticulum. Recognizes and selectively binds the transmembrane domain of TA proteins in the cytosol. This complex then targets to the endoplasmic reticulum by membrane-bound receptors GET1 and GET2, where the tail-anchored protein is released for insertion. This process is regulated by ATP binding and hydrolysis. ATP binding drives the homodimer towards the closed dimer state, facilitating recognition of newly synthesized TA membrane proteins. ATP hydrolysis is required for insertion. Subsequently, the homodimer reverts towards the open dimer state, lowering its affinity for the GET1-GET2 receptor, and returning it to the cytosol to initiate a new round of targeting. Cooperates with the HDEL receptor ERD2 to mediate the ATP-dependent retrieval of resident ER proteins that contain a C-terminal H-D-E-L retention signal from the Golgi to the ER. Involved in low-level resistance to the oxyanions arsenite and arsenate, and in heat tolerance. The polypeptide is ATPase GET3 (Vanderwaltozyma polyspora (strain ATCC 22028 / DSM 70294 / BCRC 21397 / CBS 2163 / NBRC 10782 / NRRL Y-8283 / UCD 57-17) (Kluyveromyces polysporus)).